Here is a 448-residue protein sequence, read N- to C-terminus: Potassium/proton antiporter CemA (448 aa).

Transmembrane regions (helical) follow at residues 47–67 (IVFY…LSLL), 213–233 (LSSL…STLF), 314–334 (IISH…LFVA), and 395–415 (IISC…KYLI).

It belongs to the CemA family.

Its subcellular location is the plastid membrane. It catalyses the reaction K(+)(in) + H(+)(out) = K(+)(out) + H(+)(in). In terms of biological role, may be involved in proton extrusion. This chain is Potassium/proton antiporter CemA, found in Aneura mirabilis (Parasitic liverwort).